A 501-amino-acid polypeptide reads, in one-letter code: 5-beta-cholestane-3-alpha,7-alpha-diol 12-alpha-hydroxylase (501 aa).

A helical membrane pass occupies residues 1-21 (MVLWGPVLGVLLVAIVGYLCL). S326 carries the post-translational modification Phosphoserine. C440 contacts heme.

It belongs to the cytochrome P450 family. It depends on heme as a cofactor.

The protein resides in the endoplasmic reticulum membrane. It localises to the microsome membrane. The catalysed reaction is 7alpha-hydroxycholest-4-en-3-one + reduced [NADPH--hemoprotein reductase] + O2 = 7alpha,12alpha-dihydroxycholest-4-en-3-one + oxidized [NADPH--hemoprotein reductase] + H2O + H(+). It catalyses the reaction 5beta-cholestane-3alpha,7alpha-diol + reduced [NADPH--hemoprotein reductase] + O2 = 5beta-cholestane-3alpha,7alpha,12alpha-triol + oxidized [NADPH--hemoprotein reductase] + H2O + H(+). The enzyme catalyses chenodeoxycholate + reduced [NADPH--hemoprotein reductase] + O2 = cholate + oxidized [NADPH--hemoprotein reductase] + H2O + H(+). It participates in lipid metabolism; bile acid biosynthesis. A cytochrome P450 monooxygenase involved in primary bile acid biosynthesis. Catalyzes the 12alpha-hydroxylation of 7alpha-hydroxy-4-cholesten-3-one, an intermediate metabolite in cholic acid biosynthesis. Controls biliary balance of cholic acid and chenodeoxycholic acid, ultimately regulating the intestinal absorption of dietary lipids. Mechanistically, uses molecular oxygen inserting one oxygen atom into a substrate, and reducing the second into a water molecule, with two electrons provided by NADPH via cytochrome P450 reductase (CPR; NADPH--hemoprotein reductase). This chain is 5-beta-cholestane-3-alpha,7-alpha-diol 12-alpha-hydroxylase (CYP8B1), found in Sus scrofa (Pig).